We begin with the raw amino-acid sequence, 377 residues long: Cilia- and flagella-associated protein 263 (377 aa).

Coiled coils occupy residues 95-243 (LTAD…NQEL) and 280-354 (LRKE…SLKG).

It belongs to the CFAP263 family. As to quaternary structure, forms a complex with CFAP184; the interaction is required for functional activity in cilia. Interacts with HAP1 and PCM1.

It localises to the cytoplasm. It is found in the cytoskeleton. The protein localises to the microtubule organizing center. Its subcellular location is the centrosome. The protein resides in the centriolar satellite. It localises to the cell projection. It is found in the cilium. Its function is as follows. Component of centriolar satellites contributing to primary cilium formation. In complex with CFAP263, acts as a regulator of ciliary beating that connects radial spoke 3 (RS3) to the inner dynein arm (IDA) and the nexin-dynein regulatory complex (N-DRC). The complex is positioned parallel to N-DRC and forms a connection between the arch at the base of RS3, the IDA tail and N-DRC. The polypeptide is Cilia- and flagella-associated protein 263 (Homo sapiens (Human)).